Reading from the N-terminus, the 252-residue chain is tRNA (guanine-N(1)-)-methyltransferase (252 aa).

S-adenosyl-L-methionine-binding positions include Gly-113 and 133-138 (VGDFVL).

It belongs to the RNA methyltransferase TrmD family. Homodimer.

Its subcellular location is the cytoplasm. It catalyses the reaction guanosine(37) in tRNA + S-adenosyl-L-methionine = N(1)-methylguanosine(37) in tRNA + S-adenosyl-L-homocysteine + H(+). In terms of biological role, specifically methylates guanosine-37 in various tRNAs. In Francisella tularensis subsp. holarctica (strain FTNF002-00 / FTA), this protein is tRNA (guanine-N(1)-)-methyltransferase.